The following is a 449-amino-acid chain: XK-related protein 2 (449 aa).

The next 10 membrane-spanning stretches (helical) occupy residues 35–55, 68–88, 98–118, 174–194, 202–222, 241–261, 269–289, 306–326, 357–377, and 382–402; these read FSIL…LYMV, TYTF…LIFV, LSLF…EAMI, IQAF…SLIS, VVLM…CNML, LCIT…LVLF, AVPF…IKFW, VGTL…NFSC, LVEN…VLLN, and LIAL…LLFF.

The protein belongs to the XK family. As to expression, expressed predominantly in the placenta, in syncytiotrophoblasts. Moderate levels in the adrenal gland, low levels in the trachea and very low levels in the bone marrow.

Its subcellular location is the cell membrane. The chain is XK-related protein 2 (XKRX) from Homo sapiens (Human).